Consider the following 27-residue polypeptide: Dermaseptin-S4 (27 aa).

It belongs to the frog skin active peptide (FSAP) family. Dermaseptin subfamily. Monomer and oligomer. Forms aggregates in aqueous environments. As to expression, expressed by the skin glands.

The protein resides in the secreted. Its function is as follows. Potent antimicrobial peptide with activity against bacteria and protozoa. Also has activity against fungi. Also shows activity against enveloped herpes simplex virus type 1. Probably acts by disturbing membrane functions with its amphipathic structure. Binds to healthy erythrocytes (this binding is receptor independent), and has strong hemolytic activity. Does not bind to P.falciparum infected erythrocytes, but accumulates within the parasite. Kills the parasite, and only at high concentrations has a hemolytic activity on the host cell. In vitro, shows high spermicidal activities. This Phyllomedusa sauvagei (Sauvage's leaf frog) protein is Dermaseptin-S4.